The primary structure comprises 492 residues: Adenosylhomocysteinase-like 2 (492 aa).

The interval 43–64 is disordered; that stretch reads FTGSSDEEDVSPKDNHQRNSAG. Substrate contacts are provided by aspartate 192 and glutamate 217. An NAD(+)-binding site is contributed by 218–220; the sequence is SVT. Positions 247 and 251 each coordinate substrate. NAD(+)-binding positions include 283–288, glutamate 304, 360–362, asparagine 407, lysine 486, 486–490, and tyrosine 490; these read GDVGKG, MGH, and KANYY.

Belongs to the adenosylhomocysteinase family. NAD(+) serves as cofactor.

Functionally, might play a role in the regulation of methionine metabolism. In Drosophila melanogaster (Fruit fly), this protein is Adenosylhomocysteinase-like 2.